We begin with the raw amino-acid sequence, 429 residues long: MSRADDDAVGVPPTCGGRSDEEERRIVPGPNPQDGAKDGAKATAVPREPDEAALAAMSNQELLALGGKLDGVRIAYKEPRWPVEGTKAEKRAERSVAVWLLLGGVFGLALLLIFLFWPWEFKAADGESDFIYSLTTPLYGLTFGLSILSIAIGAVLYQKRFIPEEISIQERHDGASREIDRKTVVANLTDAFEGSTIRRRKLIGLSFGVGMGAFGLGTLVAFAGGLIKNPWKPVVPTAEGKKAVLWTSGWTPRYQGETIYLARATGTEDGPPFIKMRPEDMDAGGMETVFPWRESDGDGTTVESHHKLQEIAMGIRNPVMLIRIKPSDLGRVVKRKGQESFNFGEFFAFTKVCSHLGCPSSLYEQQSYRILCPCHQSQFDALHFAKPIFGPAARALAQLPITIDTDGYLVANGDFVEPVGPAFWERTTT.

The segment at Met1 to Val45 is disordered. 3 helical membrane-spanning segments follow: residues Val96–Phe116, Pro137–Tyr157, and Phe207–Ile227. Residues Arg316 to Val410 enclose the Rieske domain. [2Fe-2S] cluster is bound by residues Cys353, His355, Cys372, and His375. Residues Cys358 and Cys374 are joined by a disulfide bond.

This sequence belongs to the Rieske iron-sulfur protein family. In terms of assembly, the cytochrome bc1 complex is composed of a cytochrome b (QcrB), the Rieske iron-sulfur protein (QcrA) and a diheme cytochrome c (QcrC) subunit. [2Fe-2S] cluster is required as a cofactor.

It localises to the cell membrane. Its function is as follows. Iron-sulfur subunit of the cytochrome bc1 complex, an essential component of the respiratory electron transport chain required for ATP synthesis. The bc1 complex catalyzes the oxidation of menaquinol and the reduction of cytochrome c in the respiratory chain. The bc1 complex operates through a Q-cycle mechanism that couples electron transfer to generation of the proton gradient that drives ATP synthesis. The sequence is that of Cytochrome bc1 complex Rieske iron-sulfur subunit (qcrA) from Mycobacterium tuberculosis (strain CDC 1551 / Oshkosh).